The chain runs to 95 residues: Aspartyl/glutamyl-tRNA(Asn/Gln) amidotransferase subunit C (95 aa).

Residues 74 to 95 (GQALEPAPDADNEHFLVPQVVE) are disordered.

It belongs to the GatC family. Heterotrimer of A, B and C subunits.

It carries out the reaction L-glutamyl-tRNA(Gln) + L-glutamine + ATP + H2O = L-glutaminyl-tRNA(Gln) + L-glutamate + ADP + phosphate + H(+). The enzyme catalyses L-aspartyl-tRNA(Asn) + L-glutamine + ATP + H2O = L-asparaginyl-tRNA(Asn) + L-glutamate + ADP + phosphate + 2 H(+). Functionally, allows the formation of correctly charged Asn-tRNA(Asn) or Gln-tRNA(Gln) through the transamidation of misacylated Asp-tRNA(Asn) or Glu-tRNA(Gln) in organisms which lack either or both of asparaginyl-tRNA or glutaminyl-tRNA synthetases. The reaction takes place in the presence of glutamine and ATP through an activated phospho-Asp-tRNA(Asn) or phospho-Glu-tRNA(Gln). The polypeptide is Aspartyl/glutamyl-tRNA(Asn/Gln) amidotransferase subunit C (Salinibacter ruber (strain DSM 13855 / M31)).